A 58-amino-acid polypeptide reads, in one-letter code: UPF0391 membrane protein Sbal_1421 (58 aa).

The next 2 helical transmembrane spans lie at 6–26 (LVFLVVAVIAGLLGFTGIAGA) and 28–48 (AGIAKIIFLIFIVLLVISLLV).

It belongs to the UPF0391 family.

The protein localises to the cell membrane. This Shewanella baltica (strain OS155 / ATCC BAA-1091) protein is UPF0391 membrane protein Sbal_1421.